Consider the following 231-residue polypeptide: Cytochrome b-c1 complex subunit Rieske, mitochondrial (231 aa).

Residues 1–24 (MAPVSIVSRAAMRAAAAPARAVRA) constitute a mitochondrion transit peptide. Residues 25 to 32 (LTTSTALQ) constitute a propeptide, removed in mature form. Over 33-65 (GSSSSTFESPFKGESKAAKVPDFGKYMSKAPPS) the chain is Mitochondrial matrix. The helical transmembrane segment at 66 to 95 (TNMLFSYFMVGTMGAITAAGAKSTIQEFLK) threads the bilayer. Topologically, residues 96–231 (NMSASADVLA…FPEEGKLVIG (136 aa)) are mitochondrial intermembrane. The 96-residue stretch at 134–229 (RHRTPAEIEE…YEFPEEGKLV (96 aa)) folds into the Rieske domain. [2Fe-2S] cluster contacts are provided by Cys-174, His-176, Cys-193, and His-196. Cys-179 and Cys-195 are joined by a disulfide.

This sequence belongs to the Rieske iron-sulfur protein family. As to quaternary structure, component of the ubiquinol-cytochrome c oxidoreductase (cytochrome b-c1 complex, complex III, CIII), a multisubunit enzyme composed of 10 subunits. The complex is composed of 3 respiratory subunits cytochrome b (cob), cytochrome c1 (cyt-1) and Rieske protein (fes-1), 2 core protein subunits pep and ucr-1, and 5 low-molecular weight protein subunits qcr6, qcr7, qcr8, qcr9 and probably NCU16844/qcr10. The complex exists as an obligatory dimer and forms supercomplexes (SCs) in the inner mitochondrial membrane with NADH-ubiquinone oxidoreductase (complex I, CI) and cytochrome c oxidase (complex IV, CIV), resulting in different assemblies (supercomplexes SCI(1)III(2), SCIII(2)IV(1) and SCIII(2)IV(2) as well as higher order I(x)III(y)IV(z) megacomplexes). The cofactor is [2Fe-2S] cluster. Post-translationally, processed by both the mitochondrial processing peptidase (MPP) and the mitochondrial intermediate protease (MIP). Initially, MPP removes 25 amino acids from the newly imported precursor in the mitochondrial matrix. This proteolytic processing is then followed by a second proteolytic cleavage by MIP, which removes an octapeptide to generate mature-sized Rieske protein.

It is found in the mitochondrion inner membrane. The catalysed reaction is a quinol + 2 Fe(III)-[cytochrome c](out) = a quinone + 2 Fe(II)-[cytochrome c](out) + 2 H(+)(out). Functionally, component of the ubiquinol-cytochrome c oxidoreductase, a multisubunit transmembrane complex that is part of the mitochondrial electron transport chain which drives oxidative phosphorylation. The respiratory chain contains 3 multisubunit complexes succinate dehydrogenase (complex II, CII), ubiquinol-cytochrome c oxidoreductase (cytochrome b-c1 complex, complex III, CIII) and cytochrome c oxidase (complex IV, CIV), that cooperate to transfer electrons derived from NADH and succinate to molecular oxygen, creating an electrochemical gradient over the inner membrane that drives transmembrane transport and the ATP synthase. The cytochrome b-c1 complex catalyzes electron transfer from ubiquinol to cytochrome c, linking this redox reaction to translocation of protons across the mitochondrial inner membrane, with protons being carried across the membrane as hydrogens on the quinol. In the process called Q cycle, 2 protons are consumed from the matrix, 4 protons are released into the intermembrane space and 2 electrons are passed to cytochrome c. The Rieske protein is a catalytic core subunit containing a [2Fe-2S] iron-sulfur cluster. It cycles between 2 conformational states during catalysis to transfer electrons from the quinol bound in the Q(0) site in cytochrome b to cytochrome c1. The polypeptide is Cytochrome b-c1 complex subunit Rieske, mitochondrial (fes-1) (Neurospora crassa (strain ATCC 24698 / 74-OR23-1A / CBS 708.71 / DSM 1257 / FGSC 987)).